Consider the following 153-residue polypeptide: Aspartate carbamoyltransferase regulatory chain (153 aa).

C110, C115, C138, and C141 together coordinate Zn(2+).

The protein belongs to the PyrI family. As to quaternary structure, contains catalytic and regulatory chains. Requires Zn(2+) as cofactor.

Involved in allosteric regulation of aspartate carbamoyltransferase. The polypeptide is Aspartate carbamoyltransferase regulatory chain (Bacteroides fragilis (strain ATCC 25285 / DSM 2151 / CCUG 4856 / JCM 11019 / LMG 10263 / NCTC 9343 / Onslow / VPI 2553 / EN-2)).